A 709-amino-acid polypeptide reads, in one-letter code: Elongation factor G (709 aa).

The tr-type G domain maps to 6–295 (KFLRNIGIMA…AVCTYLPSPL (290 aa)). Residues 15 to 22 (AHIDAGKT), 92 to 96 (DTPGH), and 146 to 149 (NKMD) contribute to the GTP site.

The protein belongs to the TRAFAC class translation factor GTPase superfamily. Classic translation factor GTPase family. EF-G/EF-2 subfamily.

Its subcellular location is the cytoplasm. Catalyzes the GTP-dependent ribosomal translocation step during translation elongation. During this step, the ribosome changes from the pre-translocational (PRE) to the post-translocational (POST) state as the newly formed A-site-bound peptidyl-tRNA and P-site-bound deacylated tRNA move to the P and E sites, respectively. Catalyzes the coordinated movement of the two tRNA molecules, the mRNA and conformational changes in the ribosome. The chain is Elongation factor G from Amoebophilus asiaticus (strain 5a2).